The chain runs to 343 residues: Heat-inducible transcription repressor HrcA (343 aa).

Belongs to the HrcA family.

Functionally, negative regulator of class I heat shock genes (grpE-dnaK-dnaJ and groELS operons). Prevents heat-shock induction of these operons. In Leptospira biflexa serovar Patoc (strain Patoc 1 / Ames), this protein is Heat-inducible transcription repressor HrcA.